The primary structure comprises 771 residues: Probable exo-1,4-beta-xylosidase bxlB (771 aa).

Positions 1–25 (MAHITSWHYGNAIALLVSLAPGALS) are cleaved as a signal peptide. Asn-67 carries N-linked (GlcNAc...) asparagine glycosylation. Asp-293 is an active-site residue. 4 N-linked (GlcNAc...) asparagine glycosylation sites follow: Asn-305, Asn-345, Asn-423, and Asn-464.

It belongs to the glycosyl hydrolase 3 family.

The protein resides in the secreted. It carries out the reaction Hydrolysis of (1-&gt;4)-beta-D-xylans, to remove successive D-xylose residues from the non-reducing termini.. It functions in the pathway glycan degradation; xylan degradation. Xylan 1,4-beta-xylosidase involved in the hydrolysis of xylan, a major structural heterogeneous polysaccharide found in plant biomass representing the second most abundant polysaccharide in the biosphere, after cellulose. The polypeptide is Probable exo-1,4-beta-xylosidase bxlB (bxlB) (Aspergillus fumigatus (strain CBS 144.89 / FGSC A1163 / CEA10) (Neosartorya fumigata)).